The following is a 192-amino-acid chain: UPF0301 protein BTH_I1462 (192 aa).

This sequence belongs to the UPF0301 (AlgH) family.

The protein is UPF0301 protein BTH_I1462 of Burkholderia thailandensis (strain ATCC 700388 / DSM 13276 / CCUG 48851 / CIP 106301 / E264).